The primary structure comprises 347 residues: Palmitoyltransferase ZDHHC19 (347 aa).

2 consecutive transmembrane segments (helical) span residues 29–49 (VFAA…FGFP) and 59–79 (WAFP…LVSL). A DHHC domain is found at 112 to 162 (EWCPKCLFHRPPRTYHCPWCNICVEDFDHHCKWVNNCIGHRNFRLFMLLVL). Catalysis depends on cysteine 142, which acts as the S-palmitoyl cysteine intermediate. 2 consecutive transmembrane segments (helical) span residues 156 to 176 (LFML…VTCL) and 194 to 214 (AILV…LLLI). A disordered region spans residues 275-347 (IQEKTKPSPP…PTAEPAAGDP (73 aa)).

The protein belongs to the DHHC palmitoyltransferase family.

It localises to the golgi apparatus membrane. Its subcellular location is the cytoplasm. The protein localises to the perinuclear region. It carries out the reaction L-cysteinyl-[protein] + hexadecanoyl-CoA = S-hexadecanoyl-L-cysteinyl-[protein] + CoA. Functionally, palmitoyltransferase that mediates palmitoylation oproteins, such as RRAS and SQSTM1. Catalyzes palmitoylation of RRAS, leading to increased cell viability. Acts as a positive regulator of autophagy by mediating palmitoylation of SQSTM1, promoting affinity between SQSTM1 and ATG8 proteins and recruitment of ubiquitinated cargo proteins to autophagosomes. This chain is Palmitoyltransferase ZDHHC19 (Zdhhc19), found in Mus musculus (Mouse).